The chain runs to 89 residues: Small ribosomal subunit protein uS15 (89 aa).

The protein belongs to the universal ribosomal protein uS15 family. As to quaternary structure, part of the 30S ribosomal subunit. Forms a bridge to the 50S subunit in the 70S ribosome, contacting the 23S rRNA.

Functionally, one of the primary rRNA binding proteins, it binds directly to 16S rRNA where it helps nucleate assembly of the platform of the 30S subunit by binding and bridging several RNA helices of the 16S rRNA. Forms an intersubunit bridge (bridge B4) with the 23S rRNA of the 50S subunit in the ribosome. The chain is Small ribosomal subunit protein uS15 from Dinoroseobacter shibae (strain DSM 16493 / NCIMB 14021 / DFL 12).